The chain runs to 441 residues: ATP-dependent protease ATPase subunit HslU (441 aa).

ATP contacts are provided by residues isoleucine 18, 60–65 (GVGKTE), aspartate 254, glutamate 319, and arginine 391.

This sequence belongs to the ClpX chaperone family. HslU subfamily. In terms of assembly, a double ring-shaped homohexamer of HslV is capped on each side by a ring-shaped HslU homohexamer. The assembly of the HslU/HslV complex is dependent on binding of ATP.

It is found in the cytoplasm. In terms of biological role, ATPase subunit of a proteasome-like degradation complex; this subunit has chaperone activity. The binding of ATP and its subsequent hydrolysis by HslU are essential for unfolding of protein substrates subsequently hydrolyzed by HslV. HslU recognizes the N-terminal part of its protein substrates and unfolds these before they are guided to HslV for hydrolysis. This is ATP-dependent protease ATPase subunit HslU from Shewanella woodyi (strain ATCC 51908 / MS32).